The chain runs to 417 residues: Probable serine incorporator (417 aa).

Helical transmembrane passes span 25–45 (VYVV…YWTF), 69–89 (VVYR…LVMI), 104–124 (GYWP…FFIP), 131–151 (YTWI…VLLI), 180–200 (CVLS…MLVF), 208–228 (INQF…VLSI), 239–259 (SGLF…YSAI), 276–296 (KEST…YSAF), 339–359 (FFHF…TNWA), and 391–411 (VVSS…PILL).

The protein belongs to the TDE1 family.

The protein localises to the endoplasmic reticulum membrane. Enhances the incorporation of serine into phosphatidylserine and sphingolipids. The sequence is that of Probable serine incorporator (serinc) from Dictyostelium discoideum (Social amoeba).